The following is a 452-amino-acid chain: Probable V-type proton ATPase subunit H (452 aa).

It belongs to the V-ATPase H subunit family. In terms of assembly, V-ATPase is a heteromultimeric enzyme composed of a peripheral catalytic V1 complex (components A to H) attached to an integral membrane V0 proton pore complex (components: a, c, c', c'' and d).

In terms of biological role, subunit of the peripheral V1 complex of vacuolar ATPase. Subunit H activates the ATPase activity of the enzyme and couples ATPase activity to proton flow. Vacuolar ATPase is responsible for acidifying a variety of intracellular compartments in eukaryotic cells, thus providing most of the energy required for transport processes in the vacuolar system. This is Probable V-type proton ATPase subunit H from Oryza sativa subsp. japonica (Rice).